The chain runs to 219 residues: MALARQCLSKRLAAGCALARPLHAASPVAAAAANSHGPLNFRALFSSAGADAAATTGGCAPAKGDGHSREVAVVDRSRRRWPWRDLRDFVPLRLVDGIGSALSQVAETLTRPLTGKVREDEERYRLRFEVPGLGKDDVRVYVDDGVLAIHGEKRDVVEEDRGRDGDGECWAAATYHAGLLLPEDAVAEGITAEVRDGVLHVTVPRSPERKRSVTEVKVR.

The N-terminal 29 residues, 1–29 (MALARQCLSKRLAAGCALARPLHAASPVA), are a transit peptide targeting the mitochondrion. The region spanning 104–219 (QVAETLTRPL…KRSVTEVKVR (116 aa)) is the sHSP domain.

It belongs to the small heat shock protein (HSP20) family. May form oligomeric structures.

The protein resides in the mitochondrion. The chain is 23.6 kDa heat shock protein, mitochondrial (HSP23.6) from Oryza sativa subsp. japonica (Rice).